We begin with the raw amino-acid sequence, 513 residues long: uncharacterized protein (513 aa).

The CYTH domain maps to 11 to 219; sequence HLEVERKFDV…SKLARVLGAT (209 aa). The 279-residue stretch at 228–506 folds into the CHAD domain; it reads PQPPADPVHR…LEAALRKLDK (279 aa).

This is an uncharacterized protein from Mycobacterium tuberculosis (strain CDC 1551 / Oshkosh).